The following is a 247-amino-acid chain: Probable transcriptional regulatory protein PBPRA1113 (247 aa).

It belongs to the TACO1 family.

It localises to the cytoplasm. The sequence is that of Probable transcriptional regulatory protein PBPRA1113 from Photobacterium profundum (strain SS9).